Consider the following 324-residue polypeptide: UDP-N-acetylenolpyruvoylglucosamine reductase (324 aa).

An FAD-binding PCMH-type domain is found at 38–231 (AGGSARRLYV…SRERIRSLLK (194 aa)). Residue R195 is part of the active site. S246 serves as the catalytic Proton donor. E316 is an active-site residue.

Belongs to the MurB family. FAD serves as cofactor.

Its subcellular location is the cytoplasm. The catalysed reaction is UDP-N-acetyl-alpha-D-muramate + NADP(+) = UDP-N-acetyl-3-O-(1-carboxyvinyl)-alpha-D-glucosamine + NADPH + H(+). It functions in the pathway cell wall biogenesis; peptidoglycan biosynthesis. In terms of biological role, cell wall formation. This Thiobacillus denitrificans (strain ATCC 25259 / T1) protein is UDP-N-acetylenolpyruvoylglucosamine reductase.